Consider the following 237-residue polypeptide: MNIKDVGVIIAKKPLKENTFIITVFTKNHGLYSGVVKESSKKSKFIYQEGNIVDFLWQARLHEHIGMAKCELIKSYTGYFIINKAKLYAFNSVISLIKELFHEREEHSNFFSFLINYLDNLSKNFCFRDYINFELALLAETGYKLDLTKCGVTHVTTDLNYVSPKSARALSYEVGKPYKDKLLILPKFLLSDDSEITLEEKRQASTLTNYFFNRYLFHNNRQAEARQIFMEYILNNS.

Belongs to the RecO family.

In terms of biological role, involved in DNA repair and RecF pathway recombination. The protein is DNA repair protein RecO of Rickettsia felis (strain ATCC VR-1525 / URRWXCal2) (Rickettsia azadi).